The primary structure comprises 63 residues: Kappa-theraphotoxin-Cg3a 1 (63 aa).

The signal sequence occupies residues 1 to 21 (MKNTSILFILGLALLLVLAFE). A propeptide spanning residues 22 to 29 (VQVGESDG) is cleaved from the precursor. 3 disulfide bridges follow: Cys-31/Cys-46, Cys-38/Cys-51, and Cys-45/Cys-58.

It belongs to the neurotoxin 10 (Hwtx-1) family. 44 (Jztx-4) subfamily. In terms of tissue distribution, expressed by the venom gland.

It localises to the secreted. Functionally, gating modifier of Kv2.1/KCNB1, Kv2.2/KCNB2 and Kv4.3/KCND3 channels. The protein is Kappa-theraphotoxin-Cg3a 1 of Chilobrachys guangxiensis (Chinese earth tiger tarantula).